Consider the following 120-residue polypeptide: UPF0102 protein Daro_0503 (120 aa).

The interval 1-20 is disordered; it reads MQVKANDTTTARGREAEDRA.

The protein belongs to the UPF0102 family.

The sequence is that of UPF0102 protein Daro_0503 from Dechloromonas aromatica (strain RCB).